The sequence spans 355 residues: Glycerol-1-phosphate dehydrogenase [NAD(P)+] (355 aa).

NAD(+) contacts are provided by residues 101–105 and 123–126; these read GKSID and TAAS. Aspartate 128 is a substrate binding site. NAD(+) is bound at residue serine 132. A substrate-binding site is contributed by aspartate 175. Positions 175 and 255 each coordinate Zn(2+). Histidine 259 lines the substrate pocket. Residue histidine 271 coordinates Zn(2+).

Belongs to the glycerol-1-phosphate dehydrogenase family. As to quaternary structure, homodimer. Requires Zn(2+) as cofactor.

The protein localises to the cytoplasm. The catalysed reaction is sn-glycerol 1-phosphate + NAD(+) = dihydroxyacetone phosphate + NADH + H(+). The enzyme catalyses sn-glycerol 1-phosphate + NADP(+) = dihydroxyacetone phosphate + NADPH + H(+). It participates in membrane lipid metabolism; glycerophospholipid metabolism. Catalyzes the NAD(P)H-dependent reduction of dihydroxyacetonephosphate (DHAP or glycerone phosphate) to glycerol 1-phosphate (G1P). The G1P thus generated is used as the glycerophosphate backbone of phospholipids in the cellular membranes of Archaea. The polypeptide is Glycerol-1-phosphate dehydrogenase [NAD(P)+] (Staphylothermus marinus (strain ATCC 43588 / DSM 3639 / JCM 9404 / F1)).